The chain runs to 373 residues: Chaperone protein DnaJ (373 aa).

Residues 5–70 (DYYEVLGVAK…QKRAAYDRYG (66 aa)) enclose the J domain. The CR-type zinc-finger motif lies at 133 to 211 (GFDTEIRVPS…CDGVGRTRRN (79 aa)). The Zn(2+) site is built by Cys-146, Cys-149, Cys-163, Cys-166, Cys-185, Cys-188, Cys-199, and Cys-202. CXXCXGXG motif repeat units follow at residues 146–153 (CDTCHGSG), 163–170 (CRTCGGSG), 185–192 (CPTCHGTG), and 199–206 (CPSCDGVG).

This sequence belongs to the DnaJ family. Homodimer. It depends on Zn(2+) as a cofactor.

Its subcellular location is the cytoplasm. Functionally, participates actively in the response to hyperosmotic and heat shock by preventing the aggregation of stress-denatured proteins and by disaggregating proteins, also in an autonomous, DnaK-independent fashion. Unfolded proteins bind initially to DnaJ; upon interaction with the DnaJ-bound protein, DnaK hydrolyzes its bound ATP, resulting in the formation of a stable complex. GrpE releases ADP from DnaK; ATP binding to DnaK triggers the release of the substrate protein, thus completing the reaction cycle. Several rounds of ATP-dependent interactions between DnaJ, DnaK and GrpE are required for fully efficient folding. Also involved, together with DnaK and GrpE, in the DNA replication of plasmids through activation of initiation proteins. The sequence is that of Chaperone protein DnaJ from Bordetella bronchiseptica (strain ATCC BAA-588 / NCTC 13252 / RB50) (Alcaligenes bronchisepticus).